The chain runs to 255 residues: Imidazole glycerol phosphate synthase subunit HisF (255 aa).

Residues Asp-12 and Asp-131 contribute to the active site.

The protein belongs to the HisA/HisF family. Heterodimer of HisH and HisF.

The protein localises to the cytoplasm. It catalyses the reaction 5-[(5-phospho-1-deoxy-D-ribulos-1-ylimino)methylamino]-1-(5-phospho-beta-D-ribosyl)imidazole-4-carboxamide + L-glutamine = D-erythro-1-(imidazol-4-yl)glycerol 3-phosphate + 5-amino-1-(5-phospho-beta-D-ribosyl)imidazole-4-carboxamide + L-glutamate + H(+). It participates in amino-acid biosynthesis; L-histidine biosynthesis; L-histidine from 5-phospho-alpha-D-ribose 1-diphosphate: step 5/9. Its function is as follows. IGPS catalyzes the conversion of PRFAR and glutamine to IGP, AICAR and glutamate. The HisF subunit catalyzes the cyclization activity that produces IGP and AICAR from PRFAR using the ammonia provided by the HisH subunit. The sequence is that of Imidazole glycerol phosphate synthase subunit HisF from Ignicoccus hospitalis (strain KIN4/I / DSM 18386 / JCM 14125).